A 301-amino-acid polypeptide reads, in one-letter code: Glycine--tRNA ligase alpha subunit (301 aa).

This sequence belongs to the class-II aminoacyl-tRNA synthetase family. In terms of assembly, tetramer of two alpha and two beta subunits.

Its subcellular location is the cytoplasm. The catalysed reaction is tRNA(Gly) + glycine + ATP = glycyl-tRNA(Gly) + AMP + diphosphate. The polypeptide is Glycine--tRNA ligase alpha subunit (Actinobacillus pleuropneumoniae serotype 5b (strain L20)).